Here is a 486-residue protein sequence, read N- to C-terminus: Ammonium transporter 2 member 1 (486 aa).

11 helical membrane passes run 29–49 (ASTL…GSIV), 57–77 (SAFM…LVGF), 127–147 (LVLF…GSVL), 161–181 (LWLL…GFLY), 190–210 (GGYV…YWVG), 225–245 (ILLM…FNGG), 252–272 (IAAS…LLMW), 285–305 (VIGA…GAGL), 309–329 (WAAV…MMIL), 343–363 (LAVF…TGLL), and 399–419 (FVIA…GLFI). Residues 454-470 (RHDLSRGGGGGDRDGPA) are compositionally biased toward basic and acidic residues. The tract at residues 454–473 (RHDLSRGGGGGDRDGPAGER) is disordered.

This sequence belongs to the ammonia transporter channel (TC 1.A.11.2) family. In terms of tissue distribution, expressed in roots and leaf blades and sheaths.

The protein resides in the cell membrane. Involved in ammonium transport. In Oryza sativa subsp. japonica (Rice), this protein is Ammonium transporter 2 member 1 (AMT2-1).